The primary structure comprises 182 residues: Ribosome-recycling factor (182 aa).

The protein belongs to the RRF family.

It is found in the cytoplasm. In terms of biological role, responsible for the release of ribosomes from messenger RNA at the termination of protein biosynthesis. May increase the efficiency of translation by recycling ribosomes from one round of translation to another. The protein is Ribosome-recycling factor of Hydrogenobaculum sp. (strain Y04AAS1).